A 290-amino-acid polypeptide reads, in one-letter code: Glutamate 5-kinase (290 aa).

Lys-21 provides a ligand contact to ATP. 3 residues coordinate substrate: Ser-60, Asp-151, and Asn-163. Residue 217–223 (TGGMFTK) participates in ATP binding.

Belongs to the glutamate 5-kinase family.

The protein resides in the cytoplasm. The catalysed reaction is L-glutamate + ATP = L-glutamyl 5-phosphate + ADP. The protein operates within amino-acid biosynthesis; L-proline biosynthesis; L-glutamate 5-semialdehyde from L-glutamate: step 1/2. Functionally, catalyzes the transfer of a phosphate group to glutamate to form L-glutamate 5-phosphate. The polypeptide is Glutamate 5-kinase (Leptospira interrogans serogroup Icterohaemorrhagiae serovar copenhageni (strain Fiocruz L1-130)).